Consider the following 46-residue polypeptide: GTP cyclohydrolase 1 (46 aa).

Cys-7 contributes to the Zn(2+) binding site.

It belongs to the GTP cyclohydrolase I family. As to quaternary structure, homomer.

It carries out the reaction GTP + H2O = 7,8-dihydroneopterin 3'-triphosphate + formate + H(+). It functions in the pathway cofactor biosynthesis; 7,8-dihydroneopterin triphosphate biosynthesis; 7,8-dihydroneopterin triphosphate from GTP: step 1/1. The sequence is that of GTP cyclohydrolase 1 (folE) from Bacillus pumilus (Bacillus mesentericus).